The following is a 1633-amino-acid chain: Laminin-like protein lam-2 (1633 aa).

The first 19 residues, 1–19 (MTSILWLFSLAVLWHMGQP), serve as a signal peptide directing secretion. Residues 47–286 (QPQRCVPDFV…AISDFAVGGR (240 aa)) enclose the Laminin N-terminal domain. Asn-116 and Asn-136 each carry an N-linked (GlcNAc...) asparagine glycan. 16 disulfide bridges follow: Cys-287–Cys-296, Cys-289–Cys-310, Cys-312–Cys-321, Cys-324–Cys-344, Cys-347–Cys-356, Cys-349–Cys-372, Cys-375–Cys-384, Cys-387–Cys-400, Cys-403–Cys-415, Cys-405–Cys-421, Cys-423–Cys-432, Cys-435–Cys-447, Cys-450–Cys-464, Cys-452–Cys-471, Cys-473–Cys-482, and Cys-485–Cys-500. Laminin EGF-like domains are found at residues 287 to 346 (CKCN…ECIA), 347 to 402 (CNCS…YCVA), 403 to 449 (CGCN…GCKN), and 450 to 502 (CGCE…GCTP). Asn-348 carries an N-linked (GlcNAc...) asparagine glycan. One can recognise a Laminin EGF-like 5; first part domain in the interval 503-512 (CFCFGHSSIC). N-linked (GlcNAc...) asparagine glycosylation is found at Asn-522, Asn-658, and Asn-740. A Laminin IV type A domain is found at 529–701 (QDKQKWAGQN…NPKQATWIEH (173 aa)). The region spanning 702-747 (CECLPGFVGQFCESCESGFRRETKFGGPFNHCIKCDCHNHSNSCEA) is the Laminin EGF-like 5; second part domain. 23 disulfides stabilise this stretch: Cys-736-Cys-745, Cys-738-Cys-752, Cys-754-Cys-763, Cys-766-Cys-782, Cys-785-Cys-803, Cys-806-Cys-815, Cys-818-Cys-832, Cys-835-Cys-849, Cys-837-Cys-856, Cys-859-Cys-868, Cys-871-Cys-887, Cys-890-Cys-909, Cys-892-Cys-916, Cys-918-Cys-927, Cys-930-Cys-943, Cys-946-Cys-958, Cys-948-Cys-965, Cys-967-Cys-976, Cys-979-Cys-991, Cys-994-Cys-1006, Cys-996-Cys-1013, Cys-1015-Cys-1024, and Cys-1027-Cys-1038. The 33-residue stretch at 752-784 (CICEHNTAGDTCERCARGYYGDALQGTEEDCQK) folds into the Laminin EGF-like 6; truncated domain. Laminin EGF-like domains are found at residues 785–834 (CPCP…ECVE), 835–889 (CACS…NCQS), 890–945 (CGCF…GCQE), 946–993 (CNCD…GCQP), and 994–1040 (CDCE…GCLP). The N-linked (GlcNAc...) asparagine glycan is linked to Asn-936. Asn-1077, Asn-1183, Asn-1226, Asn-1259, Asn-1336, Asn-1452, and Asn-1528 each carry an N-linked (GlcNAc...) asparagine glycan.

Its function is as follows. During the formation of neuromuscular junctions at the larval stage, negatively regulates membrane protrusion from body wall muscles, probably downstream of the integrin complex formed by pat-2 and pat-3. This is Laminin-like protein lam-2 (lam-2) from Caenorhabditis elegans.